A 326-amino-acid polypeptide reads, in one-letter code: 4-hydroxy-3-methylbut-2-enyl diphosphate reductase 1 (326 aa).

Residue C27 coordinates [4Fe-4S] cluster. (2E)-4-hydroxy-3-methylbut-2-enyl diphosphate is bound by residues H56 and H89. The dimethylallyl diphosphate site is built by H56 and H89. Residues H56 and H89 each contribute to the isopentenyl diphosphate site. C111 contributes to the [4Fe-4S] cluster binding site. H139 contacts (2E)-4-hydroxy-3-methylbut-2-enyl diphosphate. H139 serves as a coordination point for dimethylallyl diphosphate. Residue H139 coordinates isopentenyl diphosphate. The active-site Proton donor is the E141. (2E)-4-hydroxy-3-methylbut-2-enyl diphosphate is bound at residue T179. [4Fe-4S] cluster is bound at residue C209. 4 residues coordinate (2E)-4-hydroxy-3-methylbut-2-enyl diphosphate: S237, S238, N239, and S281. Positions 237, 238, 239, and 281 each coordinate dimethylallyl diphosphate. S237, S238, N239, and S281 together coordinate isopentenyl diphosphate.

It belongs to the IspH family. Requires [4Fe-4S] cluster as cofactor.

It carries out the reaction isopentenyl diphosphate + 2 oxidized [2Fe-2S]-[ferredoxin] + H2O = (2E)-4-hydroxy-3-methylbut-2-enyl diphosphate + 2 reduced [2Fe-2S]-[ferredoxin] + 2 H(+). It catalyses the reaction dimethylallyl diphosphate + 2 oxidized [2Fe-2S]-[ferredoxin] + H2O = (2E)-4-hydroxy-3-methylbut-2-enyl diphosphate + 2 reduced [2Fe-2S]-[ferredoxin] + 2 H(+). The protein operates within isoprenoid biosynthesis; dimethylallyl diphosphate biosynthesis; dimethylallyl diphosphate from (2E)-4-hydroxy-3-methylbutenyl diphosphate: step 1/1. It participates in isoprenoid biosynthesis; isopentenyl diphosphate biosynthesis via DXP pathway; isopentenyl diphosphate from 1-deoxy-D-xylulose 5-phosphate: step 6/6. Its function is as follows. Catalyzes the conversion of 1-hydroxy-2-methyl-2-(E)-butenyl 4-diphosphate (HMBPP) into a mixture of isopentenyl diphosphate (IPP) and dimethylallyl diphosphate (DMAPP). Acts in the terminal step of the DOXP/MEP pathway for isoprenoid precursor biosynthesis. The chain is 4-hydroxy-3-methylbut-2-enyl diphosphate reductase 1 from Burkholderia pseudomallei (strain K96243).